The following is a 608-amino-acid chain: Elongation factor 4 (608 aa).

In terms of domain architecture, tr-type G spans 11 to 193 (DHIRNFSIVA…AIVNRLPPPK (183 aa)). GTP-binding positions include 23-28 (DHGKST) and 140-143 (NKID).

This sequence belongs to the TRAFAC class translation factor GTPase superfamily. Classic translation factor GTPase family. LepA subfamily.

The protein resides in the cell inner membrane. The catalysed reaction is GTP + H2O = GDP + phosphate + H(+). Functionally, required for accurate and efficient protein synthesis under certain stress conditions. May act as a fidelity factor of the translation reaction, by catalyzing a one-codon backward translocation of tRNAs on improperly translocated ribosomes. Back-translocation proceeds from a post-translocation (POST) complex to a pre-translocation (PRE) complex, thus giving elongation factor G a second chance to translocate the tRNAs correctly. Binds to ribosomes in a GTP-dependent manner. This is Elongation factor 4 from Agrobacterium fabrum (strain C58 / ATCC 33970) (Agrobacterium tumefaciens (strain C58)).